The chain runs to 760 residues: Xaa-Pro dipeptidyl-peptidase (760 aa).

Residues serine 349, aspartate 469, and histidine 499 each act as charge relay system in the active site.

It belongs to the peptidase S15 family. Homodimer.

The protein resides in the cytoplasm. The enzyme catalyses Hydrolyzes Xaa-Pro-|- bonds to release unblocked, N-terminal dipeptides from substrates including Ala-Pro-|-p-nitroanilide and (sequentially) Tyr-Pro-|-Phe-Pro-|-Gly-Pro-|-Ile.. Its function is as follows. Removes N-terminal dipeptides sequentially from polypeptides having unsubstituted N-termini provided that the penultimate residue is proline. The protein is Xaa-Pro dipeptidyl-peptidase of Streptococcus pyogenes serotype M6 (strain ATCC BAA-946 / MGAS10394).